A 541-amino-acid chain; its full sequence is Membrane protein insertase YidC (541 aa).

6 consecutive transmembrane segments (helical) span residues 7–27, 289–309, 356–376, 430–450, 463–483, and 498–518; these read FLIV…GVTH, YLLT…VTLP, IIHS…LAFY, LPIL…LEMV, LSAQ…MFAQ, and IMMA…SGLV.

This sequence belongs to the OXA1/ALB3/YidC family. Type 1 subfamily. As to quaternary structure, interacts with the Sec translocase complex via SecD. Specifically interacts with transmembrane segments of nascent integral membrane proteins during membrane integration.

It localises to the cell inner membrane. Required for the insertion and/or proper folding and/or complex formation of integral membrane proteins into the membrane. Involved in integration of membrane proteins that insert both dependently and independently of the Sec translocase complex, as well as at least some lipoproteins. Aids folding of multispanning membrane proteins. This chain is Membrane protein insertase YidC, found in Ruthia magnifica subsp. Calyptogena magnifica.